We begin with the raw amino-acid sequence, 355 residues long: Probable dual-specificity RNA methyltransferase RlmN (355 aa).

Residues 1-20 are disordered; the sequence is MSATPVTQLTPSSQPQQPCS. The active-site Proton acceptor is the Glu-107. Residues 113 to 341 form the Radical SAM core domain; that stretch reads TDKRLTVCVS…VSVRYSRGLE (229 aa). Residues Cys-120 and Cys-346 are joined by a disulfide bond. 3 residues coordinate [4Fe-4S] cluster: Cys-127, Cys-131, and Cys-134. S-adenosyl-L-methionine-binding positions include 174 to 175, Ser-204, 227 to 229, and Asn-303; these read GE and SLH. The active-site S-methylcysteine intermediate is Cys-346.

The protein belongs to the radical SAM superfamily. RlmN family. [4Fe-4S] cluster is required as a cofactor.

The protein resides in the cytoplasm. The enzyme catalyses adenosine(2503) in 23S rRNA + 2 reduced [2Fe-2S]-[ferredoxin] + 2 S-adenosyl-L-methionine = 2-methyladenosine(2503) in 23S rRNA + 5'-deoxyadenosine + L-methionine + 2 oxidized [2Fe-2S]-[ferredoxin] + S-adenosyl-L-homocysteine. The catalysed reaction is adenosine(37) in tRNA + 2 reduced [2Fe-2S]-[ferredoxin] + 2 S-adenosyl-L-methionine = 2-methyladenosine(37) in tRNA + 5'-deoxyadenosine + L-methionine + 2 oxidized [2Fe-2S]-[ferredoxin] + S-adenosyl-L-homocysteine. Specifically methylates position 2 of adenine 2503 in 23S rRNA and position 2 of adenine 37 in tRNAs. This Nostoc sp. (strain PCC 7120 / SAG 25.82 / UTEX 2576) protein is Probable dual-specificity RNA methyltransferase RlmN.